The following is a 299-amino-acid chain: Taste receptor type 2 member 1 (299 aa).

Residues 1 to 9 (MLESHLIIY) lie on the Extracellular side of the membrane. The helical transmembrane segment at 10-30 (FLLAVIQFLLGIFTNGIIVVV) threads the bilayer. At 31–55 (NGIDLIKHRKMAPLDLLLSCLAVSR) the chain is on the cytoplasmic side. The chain crosses the membrane as a helical span at residues 56–76 (IFLQLFIFYVNVIVIFFIEFI). Over 77-81 (MCSAN) the chain is Extracellular. A helical membrane pass occupies residues 82 to 102 (CAILLFINELELWLATWLGVF). Residues 103–124 (YCAKVASVRHPLFXWLKMRISK) lie on the Cytoplasmic side of the membrane. Residues 125-145 (LVPWMILGSLLYVSMICVFHS) traverse the membrane as a helical segment. Over 146–178 (KYAGFMVPYFLRNFFSQNTTIQKEDTLAIQIFS) the chain is Extracellular. The N-linked (GlcNAc...) asparagine glycan is linked to Asn-163. The chain crosses the membrane as a helical span at residues 179–199 (FVAEFSVPLLIFLVAVLLLIF). Over 200 to 222 (SLGRHTRQMRNTVAGSRVPGRGA) the chain is Cytoplasmic. Residues 223–243 (PISALLSILSFLILYFSHCMI) form a helical membrane-spanning segment. At 244-257 (KVFLSSLKFHIRRF) the chain is on the extracellular side. Residues 258-278 (IFLFFILVIGIYPSGHSLILI) form a helical membrane-spanning segment. At 279–299 (LGNPKLKQNAKKFLLHSKCCQ) the chain is on the cytoplasmic side.

It belongs to the G-protein coupled receptor T2R family.

It is found in the membrane. Its function is as follows. Receptor that may play a role in the perception of bitterness and is gustducin-linked. May play a role in sensing the chemical composition of the gastrointestinal content. The activity of this receptor may stimulate alpha gustducin, mediate PLC-beta-2 activation and lead to the gating of TRPM5. The chain is Taste receptor type 2 member 1 (TAS2R1) from Gorilla gorilla gorilla (Western lowland gorilla).